Reading from the N-terminus, the 150-residue chain is Bcl-2-interacting killer (150 aa).

The BH3 signature appears at 51 to 65 (VALRLACIGDEMDLC). A helical transmembrane segment spans residues 127 to 147 (PGQLFPMVLLVFLLLGGAWYL). The segment at 127–148 (PGQLFPMVLLVFLLLGGAWYLQ) is leucine-zipper.

Interacts with RHBDL4/RHBDD1. Interacts with BCL2L10/BCL-B. Proteolytically cleaved by RHBDL4/RHBDD1. RHBDL4/RHBDD1-induced cleavage is a necessary step prior its degradation by the proteosome-dependent mechanism. In terms of processing, ubiquitinated by the ECS(ASB11) complex in response to endoplasmic reticulum stress, leading to substrate recognition by the segregase p97/VCP and degradation by the proteasome. In terms of tissue distribution, expressed in testis, kidney, liver, lung and heart.

It is found in the endomembrane system. The protein resides in the mitochondrion membrane. Functionally, accelerates programmed cell death. Binding to the apoptosis repressors Bcl-X(L), BHRF1 or Bcl-2 suppresses this death-promoting activity. The polypeptide is Bcl-2-interacting killer (Bik) (Mus musculus (Mouse)).